We begin with the raw amino-acid sequence, 1116 residues long: Surface layer protein (1116 aa).

A signal peptide spans 1 to 53 (MQDSGFKKKDRSTNIPQEQFVYTRGGEHKVMKKVVNSVLASALAITVAPMAFA). 3 SLH domains span residues 54–117 (AEDT…KLAQ), 118–181 (FNTT…RGVW), and 182–231 (PNSM…YGTD).

It is found in the secreted. The protein resides in the cell wall. It localises to the S-layer. In Brevibacillus choshinensis, this protein is Surface layer protein.